Consider the following 63-residue polypeptide: MKTSVFVLVLGLVLLFAVSFATEMEESARECGKFMWKCKNSNDCCKDLVCSSRWKWCVLASPF.

Residues 1 to 21 (MKTSVFVLVLGLVLLFAVSFA) form the signal peptide. A propeptide spanning residues 22–29 (TEMEESAR) is cleaved from the precursor. 3 cysteine pairs are disulfide-bonded: cysteine 31/cysteine 45, cysteine 38/cysteine 50, and cysteine 44/cysteine 57.

It belongs to the neurotoxin 10 (Hwtx-1) family. 63 (VsTx1) subfamily. In terms of tissue distribution, expressed by the venom gland.

Its subcellular location is the secreted. In terms of biological role, inhibits sodium channels Nav1.7/SCN9A and potassium channels Kv11.1/KCNH2. Also binds the voltage-sensor domain of the potassium channel KvAP (from the archaeon Aeropyrum pernix) with very slow apparent binding kinetics and affects channel gating. Reaches its target by dynamically partitioning into anionic or zwitterionic headgroup lipid membranes. May bind to the open state of KvAP. In Grammostola rosea (Chilean rose tarantula), this protein is Kappa-theraphotoxin-Gr3a.